We begin with the raw amino-acid sequence, 243 residues long: MRTPSLSLALSVLSLLVLGSGHYAAGLELNGTSSGKGEPSSGDHSAGGLVVSEVSTISEMPSGSELSTGDYDYSEEYDNEPQISGYIVDDSVRVEQVIKPKENKTEGEKSSEKPKRKKKGGKGGKGRRNRKKKKNPCAAKFQNFCIHGECRYIENLEVVTCHCHQDYFGERCGEKTMKTQKKDDSDLSKIALAAIIVFVSAVSVAAIGIITAVLLRKRFFREYEEAEERRRLRQENGTAHAIA.

Positions 1 to 24 (MRTPSLSLALSVLSLLVLGSGHYA) are cleaved as a signal peptide. Positions 25-96 (AGLELNGTSS…IVDDSVRVEQ (72 aa)) are excised as a propeptide. N-linked (GlcNAc...) asparagine glycosylation is present at asparagine 30. The segment covering 55–67 (STISEMPSGSELS) has biased composition (polar residues). 2 disordered regions span residues 55 to 75 (STIS…DYSE) and 98 to 135 (IKPK…KKKN). Over residues 98 to 113 (IKPKENKTEGEKSSEK) the composition is skewed to basic and acidic residues. A glycan (N-linked (GlcNAc...) asparagine) is linked at asparagine 103. Over residues 114–135 (PKRKKKGGKGGKGRRNRKKKKN) the composition is skewed to basic residues. An EGF-like domain is found at 133-173 (KKNPCAAKFQNFCIHGECRYIENLEVVTCHCHQDYFGERCG). Cystine bridges form between cysteine 137–cysteine 150, cysteine 145–cysteine 161, and cysteine 163–cysteine 172. Residues 190-213 (IALAAIIVFVSAVSVAAIGIITAV) form a helical membrane-spanning segment. N-linked (GlcNAc...) asparagine glycosylation occurs at asparagine 236.

It belongs to the amphiregulin family. The immature precursor interacts with CNIH.

The protein resides in the membrane. Its function is as follows. Ligand of the EGF receptor/EGFR. Autocrine growth factor as well as a mitogen for a broad range of target cells including astrocytes, Schwann cells and fibroblasts. This is Amphiregulin (Areg) from Rattus norvegicus (Rat).